Reading from the N-terminus, the 205-residue chain is Small ribosomal subunit protein uS4 (205 aa).

A compositionally biased stretch (basic and acidic residues) spans 1 to 16; the sequence is MSKRESSKYKIDRRMG. The disordered stretch occupies residues 1 to 46; the sequence is MSKRESSKYKIDRRMGENIWGRPKSPVNRREYGPGQHGQRRKGKLS. The 64-residue stretch at 94–157 folds into the S4 RNA-binding domain; it reads SRLDAIVYRA…KQLVIVLESV (64 aa).

The protein belongs to the universal ribosomal protein uS4 family. As to quaternary structure, part of the 30S ribosomal subunit. Contacts protein S5. The interaction surface between S4 and S5 is involved in control of translational fidelity.

In terms of biological role, one of the primary rRNA binding proteins, it binds directly to 16S rRNA where it nucleates assembly of the body of the 30S subunit. With S5 and S12 plays an important role in translational accuracy. The polypeptide is Small ribosomal subunit protein uS4 (Rhizobium rhizogenes (strain K84 / ATCC BAA-868) (Agrobacterium radiobacter)).